A 103-amino-acid chain; its full sequence is Integration host factor subunit beta (103 aa).

The interval 59-82 is disordered; that stretch reads RLGRNPKTGESVALPGKHVPHFKP.

Belongs to the bacterial histone-like protein family. As to quaternary structure, heterodimer of an alpha and a beta chain.

Functionally, this protein is one of the two subunits of integration host factor, a specific DNA-binding protein that functions in genetic recombination as well as in transcriptional and translational control. This Xanthomonas oryzae pv. oryzae (strain MAFF 311018) protein is Integration host factor subunit beta.